The chain runs to 325 residues: Tetraacyldisaccharide 4'-kinase (325 aa).

Position 51–58 (Val51–Thr58) interacts with ATP.

Belongs to the LpxK family.

The enzyme catalyses a lipid A disaccharide + ATP = a lipid IVA + ADP + H(+). The protein operates within glycolipid biosynthesis; lipid IV(A) biosynthesis; lipid IV(A) from (3R)-3-hydroxytetradecanoyl-[acyl-carrier-protein] and UDP-N-acetyl-alpha-D-glucosamine: step 6/6. In terms of biological role, transfers the gamma-phosphate of ATP to the 4'-position of a tetraacyldisaccharide 1-phosphate intermediate (termed DS-1-P) to form tetraacyldisaccharide 1,4'-bis-phosphate (lipid IVA). The sequence is that of Tetraacyldisaccharide 4'-kinase from Paramagnetospirillum magneticum (strain ATCC 700264 / AMB-1) (Magnetospirillum magneticum).